Here is a 232-residue protein sequence, read N- to C-terminus: Orotidine 5'-phosphate decarboxylase (232 aa).

Substrate contacts are provided by residues D11, K32, 59–68 (DLKFHDIPNT), T118, R180, Q189, G209, and R210. The active-site Proton donor is the K61.

Belongs to the OMP decarboxylase family. Type 1 subfamily. As to quaternary structure, homodimer.

It carries out the reaction orotidine 5'-phosphate + H(+) = UMP + CO2. Its pathway is pyrimidine metabolism; UMP biosynthesis via de novo pathway; UMP from orotate: step 2/2. Catalyzes the decarboxylation of orotidine 5'-monophosphate (OMP) to uridine 5'-monophosphate (UMP). The polypeptide is Orotidine 5'-phosphate decarboxylase (Gloeothece citriformis (strain PCC 7424) (Cyanothece sp. (strain PCC 7424))).